Consider the following 1304-residue polypeptide: NAD-dependent protein deacetylase Sir2B (1304 aa).

The 439-residue stretch at 28 to 466 folds into the Deacetylase sirtuin-type domain; that stretch reads TEEEKKKVKE…LISIHNIKMK (439 aa). NAD(+) is bound by residues 53–72 and 274–277; these read GAGI…TGIW and QNID. His-294 (proton acceptor) is an active-site residue. Cys-302, Cys-305, Cys-327, and Cys-330 together coordinate Zn(2+). Residues 371 to 373, 399 to 401, and Val-417 contribute to the NAD(+) site; these read GSS and NYQ. Disordered regions lie at residues 545 to 585, 749 to 827, and 1154 to 1203; these read EHNN…SSSI, KVKS…DKDN, and EIKY…DDNN. Low complexity-rich tracts occupy residues 548–585, 756–806, and 1182–1203; these read NNNN…SSSI, NNNN…ISDH, and DDNN…DDNN.

Belongs to the sirtuin family. Class IV subfamily. The cofactor is Zn(2+).

It carries out the reaction N(6)-acetyl-L-lysyl-[protein] + NAD(+) + H2O = 2''-O-acetyl-ADP-D-ribose + nicotinamide + L-lysyl-[protein]. In terms of biological role, regulates the expression of the surface antigen-coding var genes central to the malaria pathogenesis. Cooperates with Sir2A to mediate silencing and mutual exclusive expression of only 1 of the 60 subtelomeric var genes at a time, coding for functionally different but epitopically variant versions of the erythrocyte membrane protein 1 (PfEMP1) molecule, to evade the detection by host immune surveillance. In Plasmodium falciparum (isolate 3D7), this protein is NAD-dependent protein deacetylase Sir2B.